Reading from the N-terminus, the 42-residue chain is Photosystem II reaction center protein J (42 aa).

Residues Ile10–Phe30 form a helical membrane-spanning segment.

The protein belongs to the PsbJ family. In terms of assembly, PSII is composed of 1 copy each of membrane proteins PsbA, PsbB, PsbC, PsbD, PsbE, PsbF, PsbH, PsbI, PsbJ, PsbK, PsbL, PsbM, PsbT, PsbX, PsbY, PsbZ, Psb30/Ycf12, at least 3 peripheral proteins of the oxygen-evolving complex and a large number of cofactors. It forms dimeric complexes.

The protein localises to the plastid. The protein resides in the chloroplast thylakoid membrane. One of the components of the core complex of photosystem II (PSII). PSII is a light-driven water:plastoquinone oxidoreductase that uses light energy to abstract electrons from H(2)O, generating O(2) and a proton gradient subsequently used for ATP formation. It consists of a core antenna complex that captures photons, and an electron transfer chain that converts photonic excitation into a charge separation. In Chlamydomonas reinhardtii (Chlamydomonas smithii), this protein is Photosystem II reaction center protein J.